Reading from the N-terminus, the 315-residue chain is Tetraacyldisaccharide 4'-kinase (315 aa).

52-59 (TVGGTGKT) contributes to the ATP binding site.

It belongs to the LpxK family.

The enzyme catalyses a lipid A disaccharide + ATP = a lipid IVA + ADP + H(+). It functions in the pathway glycolipid biosynthesis; lipid IV(A) biosynthesis; lipid IV(A) from (3R)-3-hydroxytetradecanoyl-[acyl-carrier-protein] and UDP-N-acetyl-alpha-D-glucosamine: step 6/6. Transfers the gamma-phosphate of ATP to the 4'-position of a tetraacyldisaccharide 1-phosphate intermediate (termed DS-1-P) to form tetraacyldisaccharide 1,4'-bis-phosphate (lipid IVA). This chain is Tetraacyldisaccharide 4'-kinase, found in Ruthia magnifica subsp. Calyptogena magnifica.